The chain runs to 206 residues: Large ribosomal subunit protein uL4 (206 aa).

This sequence belongs to the universal ribosomal protein uL4 family. Part of the 50S ribosomal subunit.

In terms of biological role, one of the primary rRNA binding proteins, this protein initially binds near the 5'-end of the 23S rRNA. It is important during the early stages of 50S assembly. It makes multiple contacts with different domains of the 23S rRNA in the assembled 50S subunit and ribosome. Its function is as follows. Forms part of the polypeptide exit tunnel. This Methylocella silvestris (strain DSM 15510 / CIP 108128 / LMG 27833 / NCIMB 13906 / BL2) protein is Large ribosomal subunit protein uL4.